Reading from the N-terminus, the 294-residue chain is tRNA-cytidine(32) 2-sulfurtransferase (294 aa).

A PP-loop motif motif is present at residues 58–63 (SGGKDS). The [4Fe-4S] cluster site is built by Cys133, Cys136, and Cys224.

It belongs to the TtcA family. As to quaternary structure, homodimer. Mg(2+) serves as cofactor. It depends on [4Fe-4S] cluster as a cofactor.

It localises to the cytoplasm. It catalyses the reaction cytidine(32) in tRNA + S-sulfanyl-L-cysteinyl-[cysteine desulfurase] + AH2 + ATP = 2-thiocytidine(32) in tRNA + L-cysteinyl-[cysteine desulfurase] + A + AMP + diphosphate + H(+). It participates in tRNA modification. Functionally, catalyzes the ATP-dependent 2-thiolation of cytidine in position 32 of tRNA, to form 2-thiocytidine (s(2)C32). The sulfur atoms are provided by the cysteine/cysteine desulfurase (IscS) system. The protein is tRNA-cytidine(32) 2-sulfurtransferase of Ruegeria pomeroyi (strain ATCC 700808 / DSM 15171 / DSS-3) (Silicibacter pomeroyi).